The chain runs to 882 residues: Valine--tRNA ligase (882 aa).

The 'HIGH' region motif lies at 45-55 (PNVTGKLHLGH). Positions 519 to 523 (KMSKS) match the 'KMSKS' region motif. Lys522 is a binding site for ATP. Positions 808-882 (LADLLNVEEE…RIAEMQKLVK (75 aa)) form a coiled coil.

It belongs to the class-I aminoacyl-tRNA synthetase family. ValS type 1 subfamily. As to quaternary structure, monomer.

The protein resides in the cytoplasm. It catalyses the reaction tRNA(Val) + L-valine + ATP = L-valyl-tRNA(Val) + AMP + diphosphate. Catalyzes the attachment of valine to tRNA(Val). As ValRS can inadvertently accommodate and process structurally similar amino acids such as threonine, to avoid such errors, it has a 'posttransfer' editing activity that hydrolyzes mischarged Thr-tRNA(Val) in a tRNA-dependent manner. This chain is Valine--tRNA ligase, found in Streptococcus pyogenes serotype M3 (strain ATCC BAA-595 / MGAS315).